A 591-amino-acid chain; its full sequence is Aspartate--tRNA(Asp/Asn) ligase (591 aa).

Residue Glu175 participates in L-aspartate binding. Positions 199 to 202 (QQYK) are aspartate. Arg221 and His450 together coordinate L-aspartate. 221–223 (RDE) lines the ATP pocket. Glu484 is an ATP binding site. Arg491 provides a ligand contact to L-aspartate. Residue 536-539 (GVDR) coordinates ATP.

This sequence belongs to the class-II aminoacyl-tRNA synthetase family. Type 1 subfamily. Homodimer.

It localises to the cytoplasm. It carries out the reaction tRNA(Asx) + L-aspartate + ATP = L-aspartyl-tRNA(Asx) + AMP + diphosphate. Functionally, aspartyl-tRNA synthetase with relaxed tRNA specificity since it is able to aspartylate not only its cognate tRNA(Asp) but also tRNA(Asn). Reaction proceeds in two steps: L-aspartate is first activated by ATP to form Asp-AMP and then transferred to the acceptor end of tRNA(Asp/Asn). This Rhodopseudomonas palustris (strain ATCC BAA-98 / CGA009) protein is Aspartate--tRNA(Asp/Asn) ligase.